The primary structure comprises 253 residues: 1-(5-phosphoribosyl)-5-[(5-phosphoribosylamino)methylideneamino] imidazole-4-carboxamide isomerase (253 aa).

Asp8 serves as the catalytic Proton acceptor. Asp131 acts as the Proton donor in catalysis.

It belongs to the HisA/HisF family.

Its subcellular location is the cytoplasm. The enzyme catalyses 1-(5-phospho-beta-D-ribosyl)-5-[(5-phospho-beta-D-ribosylamino)methylideneamino]imidazole-4-carboxamide = 5-[(5-phospho-1-deoxy-D-ribulos-1-ylimino)methylamino]-1-(5-phospho-beta-D-ribosyl)imidazole-4-carboxamide. It functions in the pathway amino-acid biosynthesis; L-histidine biosynthesis; L-histidine from 5-phospho-alpha-D-ribose 1-diphosphate: step 4/9. This chain is 1-(5-phosphoribosyl)-5-[(5-phosphoribosylamino)methylideneamino] imidazole-4-carboxamide isomerase, found in Polynucleobacter asymbioticus (strain DSM 18221 / CIP 109841 / QLW-P1DMWA-1) (Polynucleobacter necessarius subsp. asymbioticus).